The primary structure comprises 357 residues: Glycerol-3-phosphate dehydrogenase [NAD(P)+] (357 aa).

Serine 30, phenylalanine 31, arginine 51, and lysine 124 together coordinate NADPH. Residues lysine 124 and glycine 152 each coordinate sn-glycerol 3-phosphate. An NADPH-binding site is contributed by alanine 156. Sn-glycerol 3-phosphate-binding residues include lysine 207, aspartate 260, serine 270, arginine 271, and asparagine 272. Lysine 207 (proton acceptor) is an active-site residue. Arginine 271 is an NADPH binding site. Residue glutamate 297 participates in NADPH binding.

This sequence belongs to the NAD-dependent glycerol-3-phosphate dehydrogenase family.

The protein resides in the cytoplasm. The enzyme catalyses sn-glycerol 3-phosphate + NAD(+) = dihydroxyacetone phosphate + NADH + H(+). It catalyses the reaction sn-glycerol 3-phosphate + NADP(+) = dihydroxyacetone phosphate + NADPH + H(+). It functions in the pathway membrane lipid metabolism; glycerophospholipid metabolism. Its function is as follows. Catalyzes the reduction of the glycolytic intermediate dihydroxyacetone phosphate (DHAP) to sn-glycerol 3-phosphate (G3P), the key precursor for phospholipid synthesis. This chain is Glycerol-3-phosphate dehydrogenase [NAD(P)+], found in Acinetobacter baumannii (strain SDF).